The following is a 178-amino-acid chain: Peptide methionine sulfoxide reductase MsrA (178 aa).

C12 is a catalytic residue.

The protein belongs to the MsrA Met sulfoxide reductase family.

The catalysed reaction is L-methionyl-[protein] + [thioredoxin]-disulfide + H2O = L-methionyl-(S)-S-oxide-[protein] + [thioredoxin]-dithiol. It catalyses the reaction [thioredoxin]-disulfide + L-methionine + H2O = L-methionine (S)-S-oxide + [thioredoxin]-dithiol. Has an important function as a repair enzyme for proteins that have been inactivated by oxidation. Catalyzes the reversible oxidation-reduction of methionine sulfoxide in proteins to methionine. The protein is Peptide methionine sulfoxide reductase MsrA of Erwinia tasmaniensis (strain DSM 17950 / CFBP 7177 / CIP 109463 / NCPPB 4357 / Et1/99).